Consider the following 272-residue polypeptide: Ribosomal RNA small subunit methyltransferase A (272 aa).

Residues His-11, Leu-13, Gly-38, Glu-59, Asp-84, and Asn-109 each coordinate S-adenosyl-L-methionine.

The protein belongs to the class I-like SAM-binding methyltransferase superfamily. rRNA adenine N(6)-methyltransferase family. RsmA subfamily.

The protein resides in the cytoplasm. The catalysed reaction is adenosine(1518)/adenosine(1519) in 16S rRNA + 4 S-adenosyl-L-methionine = N(6)-dimethyladenosine(1518)/N(6)-dimethyladenosine(1519) in 16S rRNA + 4 S-adenosyl-L-homocysteine + 4 H(+). Specifically dimethylates two adjacent adenosines (A1518 and A1519) in the loop of a conserved hairpin near the 3'-end of 16S rRNA in the 30S particle. May play a critical role in biogenesis of 30S subunits. The chain is Ribosomal RNA small subunit methyltransferase A from Rippkaea orientalis (strain PCC 8801 / RF-1) (Cyanothece sp. (strain PCC 8801)).